The chain runs to 412 residues: Tryptophan synthase beta chain (412 aa).

Lys105 is subject to N6-(pyridoxal phosphate)lysine.

It belongs to the TrpB family. As to quaternary structure, tetramer of two alpha and two beta chains. Pyridoxal 5'-phosphate serves as cofactor.

It catalyses the reaction (1S,2R)-1-C-(indol-3-yl)glycerol 3-phosphate + L-serine = D-glyceraldehyde 3-phosphate + L-tryptophan + H2O. Its pathway is amino-acid biosynthesis; L-tryptophan biosynthesis; L-tryptophan from chorismate: step 5/5. Functionally, the beta subunit is responsible for the synthesis of L-tryptophan from indole and L-serine. This chain is Tryptophan synthase beta chain (trpB), found in Synechocystis sp. (strain ATCC 27184 / PCC 6803 / Kazusa).